A 437-amino-acid chain; its full sequence is tRNA-queuosine alpha-mannosyltransferase (437 aa).

The protein belongs to the glycosyltransferase group 1 family. Glycosyltransferase 4 subfamily.

Its subcellular location is the cytoplasm. The protein localises to the nucleus. It catalyses the reaction queuosine(34) in tRNA(Asp) + GDP-alpha-D-mannose = O-4''-alpha-D-mannosylqueuosine(34) in tRNA(Asp) + GDP + H(+). Functionally, glycosyltransferase that specifically catalyzes mannosylation of cytoplasmic tRNA(Asp) modified with queuosine at position 34 (queuosine(34)). Mannosylates the cyclopentene moiety of queuosine(34) in tRNA(Asp) to form mannosyl-queuosine(34). Mannosylation of queuosine(34) in tRNA(Asp) is required to slow-down elongation at cognate codons, GAC and GAU, thereby regulating protein translation. The polypeptide is tRNA-queuosine alpha-mannosyltransferase (gtdc1) (Xenopus tropicalis (Western clawed frog)).